The following is a 429-amino-acid chain: Kynureninase (429 aa).

Pyridoxal 5'-phosphate contacts are provided by residues leucine 109, threonine 110, phenylalanine 137–aspartate 140, aspartate 222, histidine 225, and tyrosine 247. An N6-(pyridoxal phosphate)lysine modification is found at lysine 248. The pyridoxal 5'-phosphate site is built by tryptophan 278 and asparagine 306.

It belongs to the kynureninase family. As to quaternary structure, homodimer. Requires pyridoxal 5'-phosphate as cofactor.

It carries out the reaction L-kynurenine + H2O = anthranilate + L-alanine + H(+). The catalysed reaction is 3-hydroxy-L-kynurenine + H2O = 3-hydroxyanthranilate + L-alanine + H(+). Its pathway is amino-acid degradation; L-kynurenine degradation; L-alanine and anthranilate from L-kynurenine: step 1/1. The protein operates within cofactor biosynthesis; NAD(+) biosynthesis; quinolinate from L-kynurenine: step 2/3. In terms of biological role, catalyzes the cleavage of L-kynurenine (L-Kyn) and L-3-hydroxykynurenine (L-3OHKyn) into anthranilic acid (AA) and 3-hydroxyanthranilic acid (3-OHAA), respectively. The protein is Kynureninase of Salinispora tropica (strain ATCC BAA-916 / DSM 44818 / JCM 13857 / NBRC 105044 / CNB-440).